A 314-amino-acid chain; its full sequence is DNA-directed RNA polymerase subunit alpha (314 aa).

The segment at 1-228 is alpha N-terminal domain (alpha-NTD); sequence MIEIEKPRIE…EHLNIFVGLT (228 aa). The alpha C-terminal domain (alpha-CTD) stretch occupies residues 246–314; sequence EKVLEMSIEE…DLGLGLRKED (69 aa).

The protein belongs to the RNA polymerase alpha chain family. Homodimer. The RNAP catalytic core consists of 2 alpha, 1 beta, 1 beta' and 1 omega subunit. When a sigma factor is associated with the core the holoenzyme is formed, which can initiate transcription.

It catalyses the reaction RNA(n) + a ribonucleoside 5'-triphosphate = RNA(n+1) + diphosphate. Its function is as follows. DNA-dependent RNA polymerase catalyzes the transcription of DNA into RNA using the four ribonucleoside triphosphates as substrates. The polypeptide is DNA-directed RNA polymerase subunit alpha (Staphylococcus aureus (strain Mu3 / ATCC 700698)).